Here is a 234-residue protein sequence, read N- to C-terminus: Octanoyltransferase (234 aa).

Residues 50 to 234 (GEAPELVWLL…AFEQVFGPTR (185 aa)) form the BPL/LPL catalytic domain. Substrate is bound by residues 88-95 (RGGQITYH), 163-165 (AIG), and 176-178 (GIA). Cys-194 (acyl-thioester intermediate) is an active-site residue.

Belongs to the LipB family.

The protein resides in the cytoplasm. The catalysed reaction is octanoyl-[ACP] + L-lysyl-[protein] = N(6)-octanoyl-L-lysyl-[protein] + holo-[ACP] + H(+). It participates in protein modification; protein lipoylation via endogenous pathway; protein N(6)-(lipoyl)lysine from octanoyl-[acyl-carrier-protein]: step 1/2. Its function is as follows. Catalyzes the transfer of endogenously produced octanoic acid from octanoyl-acyl-carrier-protein onto the lipoyl domains of lipoate-dependent enzymes. Lipoyl-ACP can also act as a substrate although octanoyl-ACP is likely to be the physiological substrate. The polypeptide is Octanoyltransferase (Rhodopseudomonas palustris (strain BisA53)).